Reading from the N-terminus, the 190-residue chain is Putative manganese efflux pump MntP (190 aa).

6 helical membrane-spanning segments follow: residues 6–26 (IWLL…TSGI), 36–56 (FFIM…IGWF), 61–81 (FSHL…AFWG), 108–128 (LAIA…FVGI), 138–158 (IVII…IGVF), and 169–189 (LWGG…HLFL).

The protein belongs to the MntP (TC 9.B.29) family.

It localises to the cell inner membrane. Its function is as follows. Probably functions as a manganese efflux pump. In Phocaeicola vulgatus (strain ATCC 8482 / DSM 1447 / JCM 5826 / CCUG 4940 / NBRC 14291 / NCTC 11154) (Bacteroides vulgatus), this protein is Putative manganese efflux pump MntP.